The chain runs to 177 residues: Calcium-binding protein CML38 (177 aa).

Polar residues predominate over residues 1–11 (MKNNTQPQSSF). The tract at residues 1–44 (MKNNTQPQSSFKKLCRKLSPKREDSAGEIQQHNSSNGEDKNREL) is disordered. EF-hand domains lie at 39–74 (DKNR…LGEQ), 75–110 (LSDE…DDEE), 111–146 (EKKM…LGES), and 147–177 (RTTD…LMMR). Positions 52, 54, 56, 58, 63, 88, 90, 92, 94, and 99 each coordinate Ca(2+). The Ca(2+) site is built by aspartate 160, asparagine 162, aspartate 164, and glutamate 171.

Binds to ABCG36. Expressed in cotyledons and guard cells of young leaves. In mature root, expressed in the epidermis, trichoblasts, young lateral root and root tip. Expressed from stage 9 to 15 of flower development in anther wall.

Its function is as follows. Potential calcium sensor that binds calcium in vitro. The protein is Calcium-binding protein CML38 of Arabidopsis thaliana (Mouse-ear cress).